Here is a 279-residue protein sequence, read N- to C-terminus: Dermonecrotic toxin LspiSicTox-betaIE3ii (279 aa).

The active site involves H5. Mg(2+) is bound by residues E25 and D27. Catalysis depends on H41, which acts as the Nucleophile. Intrachain disulfides connect C45–C51 and C47–C190. D85 is a Mg(2+) binding site.

This sequence belongs to the arthropod phospholipase D family. Class II subfamily. It depends on Mg(2+) as a cofactor. In terms of tissue distribution, expressed by the venom gland.

Its subcellular location is the secreted. The catalysed reaction is an N-(acyl)-sphingosylphosphocholine = an N-(acyl)-sphingosyl-1,3-cyclic phosphate + choline. It catalyses the reaction an N-(acyl)-sphingosylphosphoethanolamine = an N-(acyl)-sphingosyl-1,3-cyclic phosphate + ethanolamine. It carries out the reaction a 1-acyl-sn-glycero-3-phosphocholine = a 1-acyl-sn-glycero-2,3-cyclic phosphate + choline. The enzyme catalyses a 1-acyl-sn-glycero-3-phosphoethanolamine = a 1-acyl-sn-glycero-2,3-cyclic phosphate + ethanolamine. Dermonecrotic toxins cleave the phosphodiester linkage between the phosphate and headgroup of certain phospholipids (sphingolipid and lysolipid substrates), forming an alcohol (often choline) and a cyclic phosphate. This toxin acts on sphingomyelin (SM). It may also act on ceramide phosphoethanolamine (CPE), lysophosphatidylcholine (LPC) and lysophosphatidylethanolamine (LPE), but not on lysophosphatidylserine (LPS), and lysophosphatidylglycerol (LPG). It acts by transphosphatidylation, releasing exclusively cyclic phosphate products as second products. Induces dermonecrosis, hemolysis, increased vascular permeability, edema, inflammatory response, and platelet aggregation. The chain is Dermonecrotic toxin LspiSicTox-betaIE3ii from Loxosceles spinulosa (Recluse spider).